A 357-amino-acid polypeptide reads, in one-letter code: Peptide chain release factor 1 (357 aa).

Q234 carries the N5-methylglutamine modification. The tract at residues 283 to 313 (SKKQEQRSSNRKQQVGSGDRSERIRTYNFPQ) is disordered.

This sequence belongs to the prokaryotic/mitochondrial release factor family. Methylated by PrmC. Methylation increases the termination efficiency of RF1.

Its subcellular location is the cytoplasm. In terms of biological role, peptide chain release factor 1 directs the termination of translation in response to the peptide chain termination codons UAG and UAA. The chain is Peptide chain release factor 1 (prfA) from Borreliella burgdorferi (strain ATCC 35210 / DSM 4680 / CIP 102532 / B31) (Borrelia burgdorferi).